The following is a 297-amino-acid chain: ATP phosphoribosyltransferase (297 aa).

Residue M1 is modified to N-acetylmethionine.

The protein belongs to the ATP phosphoribosyltransferase family.

The protein localises to the cytoplasm. It carries out the reaction 1-(5-phospho-beta-D-ribosyl)-ATP + diphosphate = 5-phospho-alpha-D-ribose 1-diphosphate + ATP. Its pathway is amino-acid biosynthesis; L-histidine biosynthesis; L-histidine from 5-phospho-alpha-D-ribose 1-diphosphate: step 1/9. In terms of biological role, catalyzes the condensation of ATP and 5-phosphoribose 1-diphosphate to form N'-(5'-phosphoribosyl)-ATP (PR-ATP). Has a crucial role in the pathway because the rate of histidine biosynthesis seems to be controlled primarily by regulation of the enzymatic activity. In Saccharomyces cerevisiae (strain ATCC 204508 / S288c) (Baker's yeast), this protein is ATP phosphoribosyltransferase (HIS1).